Here is a 114-residue protein sequence, read N- to C-terminus: MRMLLGSFAVYAAAALCEIGGCYAWWCWRRAGAGAWVLLPGMASLALFGWLLTLVDSDTAGRTFAAYGGIYIVGAIVWLRLVEGRPVTLRDAAGVAICLAGAAIILSAGRGAER.

Transmembrane regions (helical) follow at residues 8–28 (FAVYAAAALCEIGGCYAWWCW), 35–55 (AWVLLPGMASLALFGWLLTLV), 64–84 (FAAYGGIYIVGAIVWLRLVEG), and 92–112 (AAGVAICLAGAAIILSAGRGA).

Belongs to the UPF0060 family.

The protein localises to the cell inner membrane. The polypeptide is UPF0060 membrane protein GDI3492/Gdia_2889 (Gluconacetobacter diazotrophicus (strain ATCC 49037 / DSM 5601 / CCUG 37298 / CIP 103539 / LMG 7603 / PAl5)).